Reading from the N-terminus, the 532-residue chain is MIARLAGRIILLSGWRRALAAFLSGAFATLTQPPFDIFVAGFVSFPVLVWLIDGAIARTDAGPLRRLLPAAKVGWWFGFGYFVSGLWWIGTALLVDADQFAWALPLAVLGLPAFLALFYAFAAMIARLLWSDGLGRILALAFGFALAEWLRTFIFTGFPWNLIGYAAMPVPLLMQSVAVIGLVGMSALAVFVFAAPALLTGGHFARTGIGLAIFLALAHVGFGAWTLSRAPAIVDENGPLAVRIVQPSIAQAMKWDNAERRAIFDKLVGLTEEAPAEGKPRPDVIVWPETAIPYILESTPQALAHIGDALQEGQVLLAGAVREEKGADGGEPRYYNSIYTIDDRGRIVSTADKVHLVPFGEYLPFESFLRGLGLQEVVEMPGGFTAGTTRHALAVKDGRSFLPLICYEAIFPDELGYEGAGASAIINVTNDAWYGDTPGPYQHFRQAQVRAVEQGLPLIRAANNGLSAIVNTYGRITGSLALDAVGVVDSYLPSPRDPFWGRPPGWIQTVLILLTLLAASVGLILYSRRRFH.

Helical transmembrane passes span Ile37–Ala57, Trp75–Val95, Leu106–Ala126, Leu128–Glu148, Val179–Leu199, and Thr207–Leu227. One can recognise a CN hydrolase domain in the interval Val245–Ser494. The active-site Proton acceptor is the Glu289. Residue Lys353 is part of the active site. Residue Cys406 is the Nucleophile of the active site. Residues Gly505–Leu525 traverse the membrane as a helical segment.

It belongs to the CN hydrolase family. Apolipoprotein N-acyltransferase subfamily.

It is found in the cell inner membrane. The enzyme catalyses N-terminal S-1,2-diacyl-sn-glyceryl-L-cysteinyl-[lipoprotein] + a glycerophospholipid = N-acyl-S-1,2-diacyl-sn-glyceryl-L-cysteinyl-[lipoprotein] + a 2-acyl-sn-glycero-3-phospholipid + H(+). It functions in the pathway protein modification; lipoprotein biosynthesis (N-acyl transfer). Its function is as follows. Catalyzes the phospholipid dependent N-acylation of the N-terminal cysteine of apolipoprotein, the last step in lipoprotein maturation. The sequence is that of Apolipoprotein N-acyltransferase from Brucella suis biovar 1 (strain 1330).